We begin with the raw amino-acid sequence, 142 residues long: Large ribosomal subunit protein uL13 (142 aa).

It belongs to the universal ribosomal protein uL13 family. As to quaternary structure, part of the 50S ribosomal subunit.

This protein is one of the early assembly proteins of the 50S ribosomal subunit, although it is not seen to bind rRNA by itself. It is important during the early stages of 50S assembly. This is Large ribosomal subunit protein uL13 from Acidithiobacillus ferrooxidans (strain ATCC 23270 / DSM 14882 / CIP 104768 / NCIMB 8455) (Ferrobacillus ferrooxidans (strain ATCC 23270)).